The sequence spans 464 residues: MLYSKENKESYLEPVFGSSAEDRDIPKYTLAKEPLEPRIAYRLVKDELLDEGSARQNLATFCQTYMEDEATKLMSETLEKNAIDKSEYPRTAELENRCVNIIADLWHAPKDQKFMGTSTIGSSEACMLGGMAMKFAWRKRAEKLGLDIYAQKPNLVISSGYQVCWEKFCVYWDIDMRVVPMDKDHMQLNTDQVLDYVDEYTIGVVGILGITYTGRYDDIYALNEKLEEYNSKTDYKVYIHVDAASGGFFTPFVEPDIIWDFRLKNVISINTSGHKYGLVYPGIGWVLWKDESYLPEELIFKVSYLGGEMPTMQINFSRSASHIIGQYYNFLRYGFEGYRTIHQKTSDVAQYLAHAVEQTGYFDIYNDGSHLPIVCYKLKDDANVKWTLYDLADRLQMRGWQVPAYPLPKNLENIIIQRYVCRADLGFNMAEEFIQDFQASIQELNNAHILFHDTQQSGVHGFTH.

Position 275 is an N6-(pyridoxal phosphate)lysine (Lys275).

Belongs to the group II decarboxylase family. Pyridoxal 5'-phosphate is required as a cofactor.

The catalysed reaction is L-glutamate + H(+) = 4-aminobutanoate + CO2. Converts internalized glutamate to GABA and increases the internal pH. Involved in glutamate-dependent acid resistance in gastric fluid. This Listeria innocua serovar 6a (strain ATCC BAA-680 / CLIP 11262) protein is Glutamate decarboxylase beta (gadB).